The sequence spans 275 residues: Activator of basal transcription 1 (275 aa).

M1 is subject to N-acetylmethionine. Composition is skewed to acidic residues over residues 1 to 10 (MEVEGLELDT) and 25 to 34 (AEEEQEESED). Residues 1–39 (MEVEGLELDTAELGPLEGSHQKLEAEEEQEESEDAAGGS) are disordered. In terms of domain architecture, RRM spans 46–145 (GIVYLGHIPP…RRRSPFRYDL (100 aa)). The stretch at 164–194 (AFERQVRRQRLRAEVAQAKRETDFYLRSVER) forms a coiled coil. The interval 200 to 275 (AADGDSTRPN…RGNSSPARNS (76 aa)) is disordered. Positions 262–275 (PSESRGNSSPARNS) are enriched in polar residues.

This sequence belongs to the ESF2/ABP1 family. In terms of assembly, interacts with ESF1/ABTAP. Interacts with IGHMBP2.

The protein resides in the nucleus. The protein localises to the nucleolus. In terms of biological role, could be a novel TATA-binding protein (TBP) which can function as a basal transcription activator. Can act as a regulator of basal transcription for class II genes. The chain is Activator of basal transcription 1 (ABT1) from Bos taurus (Bovine).